The following is a 101-amino-acid chain: Small ribosomal subunit protein bS18c (101 aa).

The protein belongs to the bacterial ribosomal protein bS18 family. In terms of assembly, part of the 30S ribosomal subunit.

The protein localises to the plastid. The protein resides in the chloroplast. This is Small ribosomal subunit protein bS18c from Carica papaya (Papaya).